Consider the following 731-residue polypeptide: Auxin response factor 3 (731 aa).

Residues Met1–Ser22 show a composition bias toward low complexity. The disordered stretch occupies residues Met1 to Cys41. Residues Phe191 to Thr293 constitute a DNA-binding region (TF-B3).

The protein belongs to the ARF family. In terms of assembly, homo and heterodimers. In terms of tissue distribution, expressed in roots, culms, leaves and young panicles.

It is found in the nucleus. Auxin response factors (ARFs) are transcriptional factors that bind specifically to the DNA sequence 5'-TGTCTC-3' found in the auxin-responsive promoter elements (AuxREs). The protein is Auxin response factor 3 (ARF3) of Oryza sativa subsp. japonica (Rice).